An 83-amino-acid chain; its full sequence is Disintegrin isoform D-2 (83 aa).

Residues Pro2–His83 form the Disintegrin domain. Cystine bridges form between Cys5/Cys24, Cys16/Cys34, Cys18/Cys29, Cys28/Cys51, Cys42/Cys48, Cys47/Cys72, and Cys60/Cys79. Positions Arg64–Asp66 match the Cell attachment site motif.

The protein belongs to the venom metalloproteinase (M12B) family. P-II subfamily. P-IIa sub-subfamily. In terms of assembly, monomer (disintegrin). Expressed by the venom gland.

Its subcellular location is the secreted. Inhibits fibrinogen interaction with platelets. Acts by binding to the alpha-IIb/beta-3 (ITGA2B/ITGB3) on the platelet surface and inhibits aggregation induced by ADP, thrombin, platelet-activating factor and collagen. This chain is Disintegrin isoform D-2, found in Bitis arietans (African puff adder).